The following is a 389-amino-acid chain: Phospho-N-acetylmuramoyl-pentapeptide-transferase (389 aa).

A run of 11 helical transmembrane segments spans residues 25–45 (RAVM…PWVI), 74–94 (MGGV…CDWG), 97–117 (FIWV…VDDY), 134–154 (FFWQ…SVSE), 167–187 (WIEG…VPFF), 190–210 (VSYP…IVGS), 222–242 (GLVI…AYVM), 259–279 (AGEL…FLWF), 286–306 (VFMG…VAVI), 311–331 (IVLF…MLQV), and 366–386 (QVTV…LSSL).

It belongs to the glycosyltransferase 4 family. MraY subfamily. It depends on Mg(2+) as a cofactor.

It is found in the cell inner membrane. The enzyme catalyses UDP-N-acetyl-alpha-D-muramoyl-L-alanyl-gamma-D-glutamyl-meso-2,6-diaminopimeloyl-D-alanyl-D-alanine + di-trans,octa-cis-undecaprenyl phosphate = di-trans,octa-cis-undecaprenyl diphospho-N-acetyl-alpha-D-muramoyl-L-alanyl-D-glutamyl-meso-2,6-diaminopimeloyl-D-alanyl-D-alanine + UMP. Its pathway is cell wall biogenesis; peptidoglycan biosynthesis. Its function is as follows. Catalyzes the initial step of the lipid cycle reactions in the biosynthesis of the cell wall peptidoglycan: transfers peptidoglycan precursor phospho-MurNAc-pentapeptide from UDP-MurNAc-pentapeptide onto the lipid carrier undecaprenyl phosphate, yielding undecaprenyl-pyrophosphoryl-MurNAc-pentapeptide, known as lipid I. This chain is Phospho-N-acetylmuramoyl-pentapeptide-transferase, found in Cupriavidus metallidurans (strain ATCC 43123 / DSM 2839 / NBRC 102507 / CH34) (Ralstonia metallidurans).